We begin with the raw amino-acid sequence, 468 residues long: Protein NEN1 (468 aa).

Positions 11–172 (FFDVETTVPK…DDVRMNLEVL (162 aa)) constitute an Exonuclease domain. Residues aspartate 13 and glutamate 15 each contribute to the Mg(2+) site. Residue histidine 159 is the Proton donor/acceptor of the active site. Aspartate 164 is a binding site for Mg(2+).

The cofactor is Mg(2+). In terms of tissue distribution, expressed in the sieve elements and phloem pole pericycle cells.

It is found in the cytoplasm. It localises to the nucleus. Functionally, probable exonuclease involved in enuclation of sieve elements. This is Protein NEN1 from Arabidopsis thaliana (Mouse-ear cress).